The sequence spans 397 residues: Arginine biosynthesis bifunctional protein ArgJ (397 aa).

Substrate contacts are provided by Thr143, Lys169, Thr180, Glu266, Asn392, and Thr397. The active-site Nucleophile is Thr180.

Belongs to the ArgJ family. In terms of assembly, heterotetramer of two alpha and two beta chains.

Its subcellular location is the cytoplasm. It carries out the reaction N(2)-acetyl-L-ornithine + L-glutamate = N-acetyl-L-glutamate + L-ornithine. The catalysed reaction is L-glutamate + acetyl-CoA = N-acetyl-L-glutamate + CoA + H(+). It functions in the pathway amino-acid biosynthesis; L-arginine biosynthesis; L-ornithine and N-acetyl-L-glutamate from L-glutamate and N(2)-acetyl-L-ornithine (cyclic): step 1/1. Its pathway is amino-acid biosynthesis; L-arginine biosynthesis; N(2)-acetyl-L-ornithine from L-glutamate: step 1/4. Competitively inhibited by L-ornithine. Catalyzes two activities which are involved in the cyclic version of arginine biosynthesis: the synthesis of N-acetylglutamate from glutamate and acetyl-CoA as the acetyl donor, and of ornithine by transacetylation between N(2)-acetylornithine and glutamate. This chain is Arginine biosynthesis bifunctional protein ArgJ, found in Thermotoga neapolitana (strain ATCC 49049 / DSM 4359 / NBRC 107923 / NS-E).